Here is a 591-residue protein sequence, read N- to C-terminus: Aspartate--tRNA ligase (591 aa).

E171 contributes to the L-aspartate binding site. An aspartate region spans residues Q195–K198. R217 is an L-aspartate binding site. ATP contacts are provided by residues R217–E219 and Q226. Residue H448 participates in L-aspartate binding. ATP is bound at residue E482. R489 contributes to the L-aspartate binding site. G534–R537 provides a ligand contact to ATP.

Belongs to the class-II aminoacyl-tRNA synthetase family. Type 1 subfamily. In terms of assembly, homodimer.

Its subcellular location is the cytoplasm. It carries out the reaction tRNA(Asp) + L-aspartate + ATP = L-aspartyl-tRNA(Asp) + AMP + diphosphate. Functionally, catalyzes the attachment of L-aspartate to tRNA(Asp) in a two-step reaction: L-aspartate is first activated by ATP to form Asp-AMP and then transferred to the acceptor end of tRNA(Asp). The sequence is that of Aspartate--tRNA ligase from Aliivibrio salmonicida (strain LFI1238) (Vibrio salmonicida (strain LFI1238)).